The primary structure comprises 923 residues: MTEPRIETEQDATRPLRDDIRFLGGVLGDTIRDHEGPEVFDLIERVRIEAFRVRREEVGRSAVAEMLRGVDIAVALPLIRAFSYFVLLANLAEDIQRDRRRAVHVAAGEPPQDSSLAATYRKLDAAALDAAAVADLLSDALVSPVITAHPTETRRRTVFDAQTRITELMRARQRATDPAERAALESRIRRQVLSLWRTALIRLARLRIQDEIAVGLRYYELTLFDVIPAINAEVRAALRARWPGADLLARPILRPGSWIGGDRDGNPYVTAEVVRHAATQAAGVALRRYLAELVELAKTLSLSARLVPVTPRVAELAAAGYPDPATHGDEPYRRALHHIRVRLSATADRVLDAPVPEAVAEPDAQPYAGPREFLDDLDAIDASLRASGDGLLADDRLAALRHAVETFGFHLQGLDMRQNSEVHEQVVAELLAWAGVHPAYGDLPEDARVELLAAELRTRRPLLGPHARLSEQAAKEVGIVRAAKQVVDTFGPEAVPNYIISMCTSVSDMLEAALLLKEGGLLDPGAPEGSPSCTVNIVPLFETIEDLGAGAATLAAALEVPVYRELVAAAGMRQEVMLGYSDSNKDGGYLAANWALYRAELDLVEVARKTGIRLRLFHGRGGTVGRGGGRSYDAILAQPAGAVRGALRLTEQGEVIAAKYAEPGAAHRNLESLIAGTLESTLLDVEGLGADAEPAYELMDELAALARAAYARLVHETPGFVEYFRQSTPVAEVGDLNIGSRPASRKPTNSVSDLRAIPWVMAWSQARVMLPGWYGTGAALEEWVGGDPGRLARLTDLYRRWPFFRTVLSNLAQVMAKSDLDIAARYAELVDDAALRDQIFGMIREEHARTLRMHAAITGHDQLLADNRSLAESIHNRFPYLEPLNQMQVELLRRLRSGDDSELVKRGILLTMNGLATALRNSG.

Catalysis depends on residues H149 and K585.

The protein belongs to the PEPCase type 1 family. Mg(2+) is required as a cofactor.

It carries out the reaction oxaloacetate + phosphate = phosphoenolpyruvate + hydrogencarbonate. Functionally, forms oxaloacetate, a four-carbon dicarboxylic acid source for the tricarboxylic acid cycle. This is Phosphoenolpyruvate carboxylase from Nocardia farcinica (strain IFM 10152).